A 48-amino-acid polypeptide reads, in one-letter code: Light-harvesting polypeptide B-885 beta-2 chain (48 aa).

Over 1-20 (AEDRKSLSGLTEQEAQEFGT) the chain is Cytoplasmic. A helical transmembrane segment spans residues 21 to 43 (LYTQGVAFVAVIAIVAHALVWAW). His-37 contributes to the a bacteriochlorophyll binding site. The Periplasmic segment spans residues 44–48 (RPWLQ).

The protein belongs to the antenna complex beta subunit family. In terms of assembly, the core complex is formed by different alpha and beta chains, binding bacteriochlorophyll molecules, and arranged most probably in tetrameric structures disposed around the reaction center. The non-pigmented gamma chains may constitute additional components.

It is found in the cell inner membrane. Functionally, antenna complexes are light-harvesting systems, which transfer the excitation energy to the reaction centers. The sequence is that of Light-harvesting polypeptide B-885 beta-2 chain from Rhodocyclus tenuis (Rhodospirillum tenue).